We begin with the raw amino-acid sequence, 921 residues long: TRPM8 channel-associated factor 1 (921 aa).

Residues 542–841 (YCWMSTGLYI…TYLQLQEAFG (300 aa)) form the Peptidase M60 domain.

It belongs to the TCAF family. As to quaternary structure, interacts with TRPM8 (via N-terminus and C-terminus domains); the interaction inhibits TRPM8 channel activity. Interacts with TRPV6. In terms of tissue distribution, isoform 2 is expressed in the prostate and strongly expressed in cancerous prostate samples.

It localises to the cell membrane. Positively regulates the plasma membrane cation channel TRPM8 activity. Involved in the recruitment of TRPM8 to the cell surface. Promotes prostate cancer cell migration inhibition in a TRPM8-dependent manner. The chain is TRPM8 channel-associated factor 1 from Homo sapiens (Human).